Consider the following 284-residue polypeptide: Pantothenate synthetase (284 aa).

30 to 37 (MGNLHDGH) contacts ATP. The active-site Proton donor is H37. Q61 lines the (R)-pantoate pocket. Position 61 (Q61) interacts with beta-alanine. 149-152 (GEKD) contributes to the ATP binding site. Position 155 (Q155) interacts with (R)-pantoate. Residues V178 and 186-189 (LSSR) contribute to the ATP site.

Belongs to the pantothenate synthetase family. As to quaternary structure, homodimer.

It localises to the cytoplasm. The catalysed reaction is (R)-pantoate + beta-alanine + ATP = (R)-pantothenate + AMP + diphosphate + H(+). Its pathway is cofactor biosynthesis; (R)-pantothenate biosynthesis; (R)-pantothenate from (R)-pantoate and beta-alanine: step 1/1. Its function is as follows. Catalyzes the condensation of pantoate with beta-alanine in an ATP-dependent reaction via a pantoyl-adenylate intermediate. The chain is Pantothenate synthetase from Klebsiella pneumoniae (strain 342).